Here is a 591-residue protein sequence, read N- to C-terminus: Glutathione hydrolase (591 aa).

The N-terminal stretch at 1–41 (MASKWIEEQPLVHRRDIRISSKSRIAAGLLVLLVLWRYGLP) is a signal peptide. An L-glutamate-binding site is contributed by Arg-122. Residues Asn-135, Asn-270, and Asn-389 are each glycosylated (N-linked (GlcNAc...) asparagine). The Nucleophile role is filled by Thr-393. L-glutamate-binding positions include Thr-411, Glu-432, and 464–465 (SA). Asn-534 carries N-linked (GlcNAc...) asparagine glycosylation.

The protein belongs to the gamma-glutamyltransferase family.

It carries out the reaction an N-terminal (5-L-glutamyl)-[peptide] + an alpha-amino acid = 5-L-glutamyl amino acid + an N-terminal L-alpha-aminoacyl-[peptide]. The catalysed reaction is glutathione + H2O = L-cysteinylglycine + L-glutamate. The enzyme catalyses an S-substituted glutathione + H2O = an S-substituted L-cysteinylglycine + L-glutamate. The protein operates within mycotoxin biosynthesis. Functionally, gamma-glutamyltransferase; part of the gene cluster that mediates the biosynthesis of the secondary metabolite ustiloxin B, an antimitotic tetrapeptide. First, ustA is processed by the subtilisin-like endoprotease Kex2 that is outside the ustiloxin B gene cluster, at the C-terminal side of Arg-Lys, after transfer to Golgi apparatus through the endoplasmic reticulum (ER). Cleavage by KEX2 generates 16 peptides YAIG-I to YAIG-XVI. To process the precursor peptide further, at least two peptidases are necessary to cleave the N-terminal and C-terminal sides of the Tyr-Ala-Ile-Gly core peptide which serves as backbone for the synthesis of ustiloxin B, through cyclization and modification of the tyrosine with a non-protein coding amino acid, norvaline. One of the two peptidases must be the serine peptidase ustP; and the other pepdidase is probably ustH. Macrocyclization of the core peptide derived from ustA requires the tyrosinase ustQ, as well as the homologous oxidases ustYa and ustYb, and leads to the production of the first cyclization product N-desmethylustiloxin F. For the formation of N-desmethylustiloxin F, three oxidation steps are required, hydroxylation at the benzylic position, hydroxylation at either the aromatic ring of Tyr or beta-position of Ile, and oxidative cyclization. UstQ may catalyze the oxidation of a phenol moiety, whereas the ustYa and ustYb are most likely responsible for the remaining two-step oxidations. N-desmethylustiloxin F is then methylated by ustM to yield ustiloxin F which in turn substrate of the cytochrome P450 monooxygenase ustC which catalyzes the formation of S-deoxyustiloxin H. The flavoprotein monooxygenases ustF1 and ustF2 then participate in the modification of the side chain of S-deoxyustiloxin H, leading to the synthesis of an oxime intermediate, via ustiloxin H. Finally, carboxylative dehydration performed by the cysteine desulfurase-like protein ustD yields ustiloxin B. The chain is Glutathione hydrolase from Aspergillus flavus (strain ATCC 200026 / FGSC A1120 / IAM 13836 / NRRL 3357 / JCM 12722 / SRRC 167).